We begin with the raw amino-acid sequence, 469 residues long: C4b-binding protein (469 aa).

The first 56 residues, 1–56, serve as a signal peptide directing secretion; it reads MCAKQQQTLLPTRAAHGRLHRNRDAVAWPFSTLCRVSGPTLFQMTFTAALWVAVFG. Sushi domains are found at residues 57 to 117, 118 to 178, 179 to 242, 243 to 301, 302 to 357, and 358 to 415; these read KCGP…SCAK, KHCR…ECVI, VKCG…TCEK, IICS…TCEF, DCDL…QCKA, and LCQK…RCEQ. 12 cysteine pairs are disulfide-bonded: Cys-58–Cys-103, Cys-88–Cys-115, Cys-120–Cys-160, Cys-146–Cys-176, Cys-181–Cys-223, Cys-209–Cys-240, Cys-245–Cys-287, Cys-273–Cys-299, Cys-303–Cys-343, Cys-329–Cys-355, Cys-359–Cys-400, and Cys-386–Cys-413. The N-linked (GlcNAc...) asparagine glycan is linked to Asn-74. N-linked (GlcNAc...) asparagine glycosylation is found at Asn-227, Asn-275, and Asn-292. Asn-366 and Asn-381 each carry an N-linked (GlcNAc...) asparagine glycan. Asn-428 is a glycosylation site (N-linked (GlcNAc...) asparagine).

In terms of assembly, homoheptamer; not covalently linked. Mouse lacks the beta chain of C4BP.

Its subcellular location is the secreted. Functionally, controls the classical pathway of complement activation. It binds as a cofactor to C3b/C4b inactivator (C3bINA), which then hydrolyzes the complement fragment C4b. It also accelerates the degradation of the C4bC2a complex (C3 convertase) by dissociating the complement fragment C2a. Alpha chain binds C4b. It also interacts with serum amyloid P component. The protein is C4b-binding protein (C4bpa) of Mus musculus (Mouse).